Consider the following 600-residue polypeptide: UvrABC system protein C (600 aa).

In terms of domain architecture, GIY-YIG spans 15–92; it reads EKPGCYLMKD…IKKYQPYYNV (78 aa). Residues 197–232 enclose the UVR domain; sequence GAVKQDLTQKMEQASEQLEFERAAEIRDQLKYIEET.

Belongs to the UvrC family. As to quaternary structure, interacts with UvrB in an incision complex.

The protein localises to the cytoplasm. In terms of biological role, the UvrABC repair system catalyzes the recognition and processing of DNA lesions. UvrC both incises the 5' and 3' sides of the lesion. The N-terminal half is responsible for the 3' incision and the C-terminal half is responsible for the 5' incision. The sequence is that of UvrABC system protein C from Lactobacillus helveticus (strain DPC 4571).